We begin with the raw amino-acid sequence, 238 residues long: ATP-dependent dethiobiotin synthetase BioD (238 aa).

Residue E12–V17 participates in ATP binding. T16 contributes to the Mg(2+) binding site. The active site involves K37. T41 lines the substrate pocket. ATP-binding positions include D50, E109–G112, G170–S171, and P200–G202. D50 and E109 together coordinate Mg(2+).

Belongs to the dethiobiotin synthetase family. Homodimer. It depends on Mg(2+) as a cofactor.

It is found in the cytoplasm. The enzyme catalyses (7R,8S)-7,8-diammoniononanoate + CO2 + ATP = (4R,5S)-dethiobiotin + ADP + phosphate + 3 H(+). It participates in cofactor biosynthesis; biotin biosynthesis; biotin from 7,8-diaminononanoate: step 1/2. Functionally, catalyzes a mechanistically unusual reaction, the ATP-dependent insertion of CO2 between the N7 and N8 nitrogen atoms of 7,8-diaminopelargonic acid (DAPA, also called 7,8-diammoniononanoate) to form a ureido ring. This Streptomyces avermitilis (strain ATCC 31267 / DSM 46492 / JCM 5070 / NBRC 14893 / NCIMB 12804 / NRRL 8165 / MA-4680) protein is ATP-dependent dethiobiotin synthetase BioD.